Reading from the N-terminus, the 230-residue chain is Cytidylate kinase (230 aa).

17 to 25 (GPTASGKGT) contributes to the ATP binding site.

Belongs to the cytidylate kinase family. Type 1 subfamily.

It localises to the cytoplasm. It catalyses the reaction CMP + ATP = CDP + ADP. It carries out the reaction dCMP + ATP = dCDP + ADP. This is Cytidylate kinase from Ralstonia nicotianae (strain ATCC BAA-1114 / GMI1000) (Ralstonia solanacearum).